Here is a 309-residue protein sequence, read N- to C-terminus: MSSGFKRPSPRTWRPKEEEELIELIVEACPTEGPRVKAGDDDAAVLPDGTVVNFDAMTRSRHVPKELRDRDLGWKFVASVVSDVGAMGGEPSFFGFSVCLDDEVDVEQLVLGISEGLREFGVSLIGGDVVEGEELVLSGTCLGKLKGEPLLMSNARPGDVVAVTGPLGGPNAFVRAILNGMEPEETLYERFARPRPPVEVGVELARGGYRAAVTDISDGLLAEAEAIARRSGVAIEIHTWKVPVDEGVEEVAQEFDVDPVDLALEGGEDYEFLICGPEDVVKEFGLTTIGRVTEGEGVRIVRNPRARSE.

Asp-41 and Asp-55 together coordinate Mg(2+). Substrate is bound at residue His-62. The Mg(2+) site is built by Asp-83, Asp-128, and Asp-215. ATP is bound at residue 127-128 (GD). Ser-217 is a binding site for ATP. Asp-218 provides a ligand contact to Mg(2+). Glu-268 contributes to the substrate binding site.

This sequence belongs to the thiamine-monophosphate kinase family.

The enzyme catalyses thiamine phosphate + ATP = thiamine diphosphate + ADP. It functions in the pathway cofactor biosynthesis; thiamine diphosphate biosynthesis; thiamine diphosphate from thiamine phosphate: step 1/1. Functionally, catalyzes the ATP-dependent phosphorylation of thiamine-monophosphate (TMP) to form thiamine-pyrophosphate (TPP), the active form of vitamin B1. The polypeptide is Thiamine-monophosphate kinase (Methanopyrus kandleri (strain AV19 / DSM 6324 / JCM 9639 / NBRC 100938)).